Here is a 526-residue protein sequence, read N- to C-terminus: MTKDIHQHRILILDFGSQYTQLIARRVREIGVYCELWAWDVTEEQIREFNPSGIILSGGPESVTEAGSPRAPEYVFNAGVPVFGICYGMQTMAEQLGGKVQSSTEREFGYAQVEVLGQTNALLRSIEDAIAPNGNALLDVWMSHGDKVTAIPADFTTIAQTATCPHAAMACESKHFYGVQFHPEVTHTRQGARMLEHFVKDICGCECLWTPATIIDDAVARIREQVGDDEVILGLSGGVDSSVVAMLVHRAIGDRLTCVFVDNGLLRLNEGEQVMEMFGDHFGLNIIKVEAEERFLSALAGEDEPEAKRKIIGRVFVEVFDDEAKKLKNARWLAQGTIYPDVIESAASKTGKAHVIKSHHNVGGMPAEMKMGLVEPLRELFKDEVRRVGLELGLPYDMLYRHPFPGPGLGVRVLGEVKKEYCDILRRADAVFIEELRKADLYNQVSQAFAVFLPVRSVGVMGDGRKYDWVIALRAVETIDFMTAHWAHLPYDFLGHVSNRIINEINGISRVVYDVSGKPPATIEWE.

One can recognise a Glutamine amidotransferase type-1 domain in the interval 9–208 (RILILDFGSQ…VKDICGCECL (200 aa)). C86 serves as the catalytic Nucleophile. Catalysis depends on residues H182 and E184. A GMPS ATP-PPase domain is found at 209-401 (WTPATIIDDA…LGLPYDMLYR (193 aa)). 236 to 242 (SGGVDSS) is an ATP binding site.

As to quaternary structure, homodimer.

It catalyses the reaction XMP + L-glutamine + ATP + H2O = GMP + L-glutamate + AMP + diphosphate + 2 H(+). Its pathway is purine metabolism; GMP biosynthesis; GMP from XMP (L-Gln route): step 1/1. Functionally, catalyzes the synthesis of GMP from XMP. The protein is GMP synthase [glutamine-hydrolyzing] of Aeromonas salmonicida (strain A449).